Here is a 152-residue protein sequence, read N- to C-terminus: ATP synthase epsilon chain 2 (152 aa).

Belongs to the ATPase epsilon chain family. As to quaternary structure, F-type ATPases have 2 components, CF(1) - the catalytic core - and CF(0) - the membrane proton channel. CF(1) has five subunits: alpha(3), beta(3), gamma(1), delta(1), epsilon(1). CF(0) has three main subunits: a, b and c.

Its subcellular location is the cell inner membrane. Functionally, produces ATP from ADP in the presence of a proton gradient across the membrane. This chain is ATP synthase epsilon chain 2, found in Burkholderia orbicola (strain AU 1054).